Reading from the N-terminus, the 662-residue chain is Glycine--tRNA ligase beta subunit (662 aa).

It belongs to the class-II aminoacyl-tRNA synthetase family. As to quaternary structure, tetramer of two alpha and two beta subunits.

The protein localises to the cytoplasm. The catalysed reaction is tRNA(Gly) + glycine + ATP = glycyl-tRNA(Gly) + AMP + diphosphate. This chain is Glycine--tRNA ligase beta subunit, found in Rickettsia akari (strain Hartford).